A 206-amino-acid chain; its full sequence is Endoplasmic reticulum transmembrane protein 1 (206 aa).

Residues 1-7 (MSLYFTT) are Lumenal-facing. A helical membrane pass occupies residues 8 to 28 (LFLLLTVEMVMLFIFVLPLPF). Residues 29–45 (RIRRGIFSTYNQLTAKQ) are Cytoplasmic-facing. Residues 46–66 (QIKTIIFITGCLVGLLFIDSW) form a helical membrane-spanning segment. Residues 67–104 (KRSQIRVSLYHNDNSGSIGSSAVTPIQALASRAYNQRN) lie on the Lumenal side of the membrane. The chain crosses the membrane as a helical span at residues 105 to 125 (MYISGFILYFSICIPTVMSIV). Residues 126–206 (KRLVKYQGLI…AAAEASKKGN (81 aa)) lie on the Cytoplasmic side of the membrane. The tract at residues 140–163 (KQKLNKPSSNSKKDSNEADSTKLQ) is disordered. Over residues 150–163 (SKKDSNEADSTKLQ) the composition is skewed to basic and acidic residues. A Glycyl lysine isopeptide (Lys-Gly) (interchain with G-Cter in ubiquitin) cross-link involves residue K190. Positions 203 to 206 (KKGN) match the Di-lysine motif motif.

Belongs to the BCAP29/BCAP31 family.

Its subcellular location is the endoplasmic reticulum membrane. Functionally, may play a role in anterograde transport of membrane proteins from the endoplasmic reticulum to the Golgi. The sequence is that of Endoplasmic reticulum transmembrane protein 1 (YET1) from Saccharomyces cerevisiae (strain ATCC 204508 / S288c) (Baker's yeast).